Here is a 321-residue protein sequence, read N- to C-terminus: AA9 family lytic polysaccharide monooxygenase D (321 aa).

A signal peptide spans 1-21 (MRSTIVATFAAGLVVASLVAA). Residue histidine 22 coordinates Cu(2+). Disulfide bonds link cysteine 75–cysteine 192 and cysteine 116–cysteine 120. N-linked (GlcNAc...) asparagine glycosylation occurs at asparagine 78. Residue histidine 105 coordinates Cu(2+). The N-linked (GlcNAc...) asparagine glycan is linked to asparagine 152. O2 contacts are provided by histidine 178 and glutamine 187. Residue tyrosine 189 coordinates Cu(2+). N-linked (GlcNAc...) asparagine glycosylation is present at asparagine 266.

It belongs to the polysaccharide monooxygenase AA9 family. Cu(2+) is required as a cofactor.

Its subcellular location is the secreted. It catalyses the reaction [(1-&gt;4)-beta-D-glucosyl]n+m + reduced acceptor + O2 = 4-dehydro-beta-D-glucosyl-[(1-&gt;4)-beta-D-glucosyl]n-1 + [(1-&gt;4)-beta-D-glucosyl]m + acceptor + H2O.. Functionally, lytic polysaccharide monooxygenase (LPMO) that depolymerizes crystalline and amorphous polysaccharides via the oxidation of scissile alpha- or beta-(1-4)-glycosidic bonds, yielding C1 or C4 oxidation products. Catalysis by LPMOs requires the reduction of the active-site copper from Cu(II) to Cu(I) by a reducing agent and H(2)O(2) or O(2) as a cosubstrate. The sequence is that of AA9 family lytic polysaccharide monooxygenase D from Geotrichum candidum (Oospora lactis).